The chain runs to 266 residues: UPF0294 protein YafD (266 aa).

It belongs to the UPF0294 family.

The protein localises to the cytoplasm. The polypeptide is UPF0294 protein YafD (Shigella dysenteriae serotype 1 (strain Sd197)).